A 699-amino-acid polypeptide reads, in one-letter code: Transketolase (699 aa).

H45 is a substrate binding site. Residues T48, H85, and 133–135 (GPL) contribute to the thiamine diphosphate site. D177 provides a ligand contact to Mg(2+). Thiamine diphosphate is bound by residues G178 and N207. N207 and I209 together coordinate Mg(2+). Positions 283, 378, and 405 each coordinate substrate. H283 contacts thiamine diphosphate. The active-site Proton donor is the E441. Residue F467 participates in thiamine diphosphate binding. Substrate is bound by residues H491, D499, and R552.

The protein belongs to the transketolase family. Homodimer. Mg(2+) serves as cofactor. Requires Ca(2+) as cofactor. It depends on Mn(2+) as a cofactor. The cofactor is Co(2+). Thiamine diphosphate is required as a cofactor.

It catalyses the reaction D-sedoheptulose 7-phosphate + D-glyceraldehyde 3-phosphate = aldehydo-D-ribose 5-phosphate + D-xylulose 5-phosphate. Its function is as follows. Catalyzes the transfer of a two-carbon ketol group from a ketose donor to an aldose acceptor, via a covalent intermediate with the cofactor thiamine pyrophosphate. This chain is Transketolase (tkt), found in Mycobacterium leprae (strain TN).